Consider the following 236-residue polypeptide: Dual specificity protein phosphatase 15 (236 aa).

Gly2 carries N-myristoyl glycine lipidation. The region spanning 4–144 is the Tyrosine-protein phosphatase domain; it reads GMTKVLPGLY…LEEFGWANSQ (141 aa). The active-site Phosphocysteine intermediate is Cys88. Positions 178 to 213 are disordered; it reads GPGTSAPSATTASSAASEGTLQRLVPRSPRESHRPL. Residues 181 to 194 show a composition bias toward low complexity; it reads TSAPSATTASSAAS.

This sequence belongs to the protein-tyrosine phosphatase family. Non-receptor class dual specificity subfamily.

It localises to the cell membrane. It carries out the reaction O-phospho-L-tyrosyl-[protein] + H2O = L-tyrosyl-[protein] + phosphate. The catalysed reaction is O-phospho-L-seryl-[protein] + H2O = L-seryl-[protein] + phosphate. It catalyses the reaction O-phospho-L-threonyl-[protein] + H2O = L-threonyl-[protein] + phosphate. Functionally, may play a role in the regulation of oligodendrocyte differentiation. May play a role in the regulation of myelin formation. Involved in the regulation of Erk1/2 phosphorylation in Schwann cells; the signaling may be linked to the regulation of myelination. May dephosphorylate MAPK13, ATF2, ERBB3, PDGFRB and SNX6. This chain is Dual specificity protein phosphatase 15 (Dusp15), found in Rattus norvegicus (Rat).